The primary structure comprises 270 residues: Orotidine 5'-phosphate decarboxylase (270 aa).

Residues Asp-39, 61 to 63 (KTH), 93 to 102 (DRKFADIGNT), Tyr-221, and Arg-239 each bind substrate. The Proton donor role is filled by Lys-95.

The protein belongs to the OMP decarboxylase family.

It carries out the reaction orotidine 5'-phosphate + H(+) = UMP + CO2. It participates in pyrimidine metabolism; UMP biosynthesis via de novo pathway; UMP from orotate: step 2/2. In Candida dubliniensis (strain CD36 / ATCC MYA-646 / CBS 7987 / NCPF 3949 / NRRL Y-17841) (Yeast), this protein is Orotidine 5'-phosphate decarboxylase (URA3).